The following is a 161-amino-acid chain: Large ribosomal subunit protein uL30m (161 aa).

The transit peptide at 1–34 (MAGILRSIVQRPPGRLQTATKGVEPLVCVDWIRH) directs the protein to the mitochondrion.

The protein belongs to the universal ribosomal protein uL30 family. Component of the mitochondrial ribosome large subunit (39S) which comprises a 16S rRNA and about 50 distinct proteins.

The protein resides in the mitochondrion. The polypeptide is Large ribosomal subunit protein uL30m (MRPL30) (Bos taurus (Bovine)).